Reading from the N-terminus, the 374-residue chain is Glutamate 5-kinase (374 aa).

K9 contacts ATP. Substrate contacts are provided by S49, D136, and N148. ATP-binding positions include 168–169 (TD) and 210–216 (TGGMKSK). Residues 276–354 (SGVVRIDQGA…DEAKQLIPLV (79 aa)) enclose the PUA domain.

This sequence belongs to the glutamate 5-kinase family.

Its subcellular location is the cytoplasm. The enzyme catalyses L-glutamate + ATP = L-glutamyl 5-phosphate + ADP. It participates in amino-acid biosynthesis; L-proline biosynthesis; L-glutamate 5-semialdehyde from L-glutamate: step 1/2. Functionally, catalyzes the transfer of a phosphate group to glutamate to form L-glutamate 5-phosphate. The sequence is that of Glutamate 5-kinase from Halalkalibacterium halodurans (strain ATCC BAA-125 / DSM 18197 / FERM 7344 / JCM 9153 / C-125) (Bacillus halodurans).